The primary structure comprises 265 residues: MQIRQSVKFKKPLIHYITNPISINDCANMILAVGAKPIMAEHPLEVSEITSISESLGINLGNITDNKMKSMLISGKISYEKKIPQVIDLVGVGCSKLRLDYAKKFILECHPNVIKGNMSEMKAIYGIKSSAKGIDVGACDIITEQNFDENIEMIKRLSMETGSVVAATGVVDIISNGTYTYIISNGCEMLSMITGTGCMLTGIIASYISSGNILEGTALAIVLMGICGELSQHVKGTGSFRNELIDNIFSISDDIIIKKIRINSY.

Methionine 39 serves as a coordination point for substrate. Lysine 115 and threonine 168 together coordinate ATP. Glycine 195 serves as a coordination point for substrate.

This sequence belongs to the Thz kinase family. Mg(2+) serves as cofactor.

The catalysed reaction is 5-(2-hydroxyethyl)-4-methylthiazole + ATP = 4-methyl-5-(2-phosphooxyethyl)-thiazole + ADP + H(+). Its pathway is cofactor biosynthesis; thiamine diphosphate biosynthesis; 4-methyl-5-(2-phosphoethyl)-thiazole from 5-(2-hydroxyethyl)-4-methylthiazole: step 1/1. Functionally, catalyzes the phosphorylation of the hydroxyl group of 4-methyl-5-beta-hydroxyethylthiazole (THZ). The sequence is that of Hydroxyethylthiazole kinase 2 from Clostridium botulinum (strain Kyoto / Type A2).